The chain runs to 128 residues: Fluoride-specific ion channel FluC (128 aa).

Helical transmembrane passes span 4-24 (LLLALIVGLGGFLGASLRYLI), 39-59 (GTLIANILGALLIGFIMEFSM), 71-91 (FLTTGIMGGLTTFSTFSYETI), and 99-119 (ITLGIENIILNLGCSLLFVVI). Residues Gly-78 and Thr-81 each coordinate Na(+).

This sequence belongs to the fluoride channel Fluc/FEX (TC 1.A.43) family.

Its subcellular location is the cell membrane. It catalyses the reaction fluoride(in) = fluoride(out). Its activity is regulated as follows. Na(+) is not transported, but it plays an essential structural role and its presence is essential for fluoride channel function. Its function is as follows. Fluoride-specific ion channel. Important for reducing fluoride concentration in the cell, thus reducing its toxicity. The protein is Fluoride-specific ion channel FluC of Clostridium perfringens (strain ATCC 13124 / DSM 756 / JCM 1290 / NCIMB 6125 / NCTC 8237 / Type A).